The sequence spans 326 residues: Vitamin B12 import system permease protein BtuC (326 aa).

9 helical membrane passes run 13-35 (IRWL…CAGE), 55-77 (IRLP…GAVM), 90-107 (LLGV…AVLL), 111-133 (QLPN…LILL), 146-168 (LLAG…YFST), 188-205 (WRQS…LWIC), 242-264 (MVGV…PHIL), 274-296 (VLLP…VARL), and 303-322 (LPIG…WLLL).

It belongs to the binding-protein-dependent transport system permease family. FecCD subfamily. The complex is composed of two ATP-binding proteins (BtuD), two transmembrane proteins (BtuC) and a solute-binding protein (BtuF).

The protein localises to the cell inner membrane. Part of the ABC transporter complex BtuCDF involved in vitamin B12 import. Involved in the translocation of the substrate across the membrane. In Shigella flexneri, this protein is Vitamin B12 import system permease protein BtuC.